A 116-amino-acid polypeptide reads, in one-letter code: Staphylococcal complement inhibitor (116 aa).

The first 31 residues, 1–31, serve as a signal peptide directing secretion; the sequence is MKIRKSILAGTLAIVLASPLVTNLDKNEAQA. The essential for activity stretch occupies residues 62–79; the sequence is LATGSLNTYYKRTIKISG.

The protein belongs to the SCIN family.

Its subcellular location is the secreted. Involved in countering the first line of host defense mechanisms. Efficiently inhibits opsonization, phagocytosis and killing of S.aureus by human neutrophils. Acts by binding and stabilizing human C3 convertases (C4b2a and C3bBb), leading to their inactivation. The convertases are no longer able to cleave complement C3, therefore preventing further C3b deposition on the bacterial surface and phagocytosis of the bacterium. Also prevents C5a-induced neutrophil responses. The protein is Staphylococcal complement inhibitor (scn) of Staphylococcus aureus (strain Mu50 / ATCC 700699).